The sequence spans 299 residues: HTH-type transcriptional regulator ArgP (299 aa).

The HTH lysR-type domain maps to 4-60 (PDYRALQALDAVIRERGFERAAQKLCITQSAVSQRIKQLENLFGQPLLVRTVPPQPT). Positions 21 to 40 (FERAAQKLCITQSAVSQRIK) form a DNA-binding region, H-T-H motif.

Belongs to the LysR transcriptional regulatory family. In terms of assembly, homodimer.

Controls the transcription of genes involved in arginine and lysine metabolism. The polypeptide is HTH-type transcriptional regulator ArgP (Proteus mirabilis (strain HI4320)).